The primary structure comprises 331 residues: Pyruvate synthase subunit PorB (331 aa).

4 residues coordinate [4Fe-4S] cluster: C21, C24, C59, and C222.

Heterotetramer of one alpha, one beta, one delta and one gamma chain. It depends on [4Fe-4S] cluster as a cofactor.

The catalysed reaction is 2 oxidized [2Fe-2S]-[ferredoxin] + pyruvate + CoA = 2 reduced [2Fe-2S]-[ferredoxin] + acetyl-CoA + CO2 + H(+). This chain is Pyruvate synthase subunit PorB (porB), found in Pyrococcus furiosus (strain ATCC 43587 / DSM 3638 / JCM 8422 / Vc1).